Here is a 158-residue protein sequence, read N- to C-terminus: Putative pre-16S rRNA nuclease (158 aa).

Belongs to the YqgF nuclease family.

The protein localises to the cytoplasm. Functionally, could be a nuclease involved in processing of the 5'-end of pre-16S rRNA. The polypeptide is Putative pre-16S rRNA nuclease (Acidiphilium cryptum (strain JF-5)).